The following is a 229-amino-acid chain: MLQSRYDHPLSAILRSPALNLPPTHANIVPMVVEQSGRGERAFDIYSRLLRERIIFLGGGAGDRRGIDDAVADSIVAQLLFLDAEDPEKDIYLYINSPGGSVTAGMAIYDTMKHIRPDVCTLCFGLAASMGAFLLSGGTPGKRMALPNARIMIHQPLGGAQGQAVDIEIQAREILYHKRKLNELLSQHTGQPIERIEADTERDFFMSAEEAKAYGLIDQVVTRQTLLSP.

S129 serves as the catalytic Nucleophile. The active site involves H154.

It belongs to the peptidase S14 family. As to quaternary structure, fourteen ClpP subunits assemble into 2 heptameric rings which stack back to back to give a disk-like structure with a central cavity, resembling the structure of eukaryotic proteasomes.

The protein localises to the cytoplasm. It carries out the reaction Hydrolysis of proteins to small peptides in the presence of ATP and magnesium. alpha-casein is the usual test substrate. In the absence of ATP, only oligopeptides shorter than five residues are hydrolyzed (such as succinyl-Leu-Tyr-|-NHMec, and Leu-Tyr-Leu-|-Tyr-Trp, in which cleavage of the -Tyr-|-Leu- and -Tyr-|-Trp bonds also occurs).. In terms of biological role, cleaves peptides in various proteins in a process that requires ATP hydrolysis. Has a chymotrypsin-like activity. Plays a major role in the degradation of misfolded proteins. The protein is ATP-dependent Clp protease proteolytic subunit 1 of Thermosynechococcus vestitus (strain NIES-2133 / IAM M-273 / BP-1).